The primary structure comprises 268 residues: Tryptophan synthase alpha chain (268 aa).

Active-site proton acceptor residues include Glu49 and Asp60.

It belongs to the TrpA family. In terms of assembly, tetramer of two alpha and two beta chains.

The enzyme catalyses (1S,2R)-1-C-(indol-3-yl)glycerol 3-phosphate + L-serine = D-glyceraldehyde 3-phosphate + L-tryptophan + H2O. It participates in amino-acid biosynthesis; L-tryptophan biosynthesis; L-tryptophan from chorismate: step 5/5. Its function is as follows. The alpha subunit is responsible for the aldol cleavage of indoleglycerol phosphate to indole and glyceraldehyde 3-phosphate. In Vibrio vulnificus (strain YJ016), this protein is Tryptophan synthase alpha chain.